Here is a 273-residue protein sequence, read N- to C-terminus: MRFLVLTGLSGAGKTTARGFLEDLGYFMVDNLPPRLWPPLLQEAAARGLARVGVVVDARALAFFQDLEEVLEALRPTVVYLEARPEVLLRRYNLTRRVHPLGAGNLMREIAEERRALAGLRGRAHLVVDTSELSPRGLKEALARFLGEEGGFLLRLVSFGFKWGPPQEADLVLDVRPLPNPHYDPALRPRTGLDPEVRRYVFSEAAEPYYRALLAVAGLAAEGARAEGRAFYTVAVGCTGGRHRSVAVAERLAEELSGRFAVEVVHRDVEREG.

8-15 (GLSGAGKT) is an ATP binding site. Residue 57-60 (DARA) coordinates GTP.

It belongs to the RapZ-like family.

Functionally, displays ATPase and GTPase activities. This Thermus thermophilus (strain ATCC BAA-163 / DSM 7039 / HB27) protein is Nucleotide-binding protein TT_C1664.